We begin with the raw amino-acid sequence, 309 residues long: Glutaminase (309 aa).

Substrate-binding residues include Ser65, Asn117, Glu162, Asn169, Tyr193, Tyr245, and Val263.

The protein belongs to the glutaminase family. Homotetramer.

The catalysed reaction is L-glutamine + H2O = L-glutamate + NH4(+). In Geobacillus thermodenitrificans (strain NG80-2), this protein is Glutaminase.